Reading from the N-terminus, the 229-residue chain is Large ribosomal subunit protein uL1 (229 aa).

The protein belongs to the universal ribosomal protein uL1 family. In terms of assembly, part of the 50S ribosomal subunit.

Binds directly to 23S rRNA. The L1 stalk is quite mobile in the ribosome, and is involved in E site tRNA release. Its function is as follows. Protein L1 is also a translational repressor protein, it controls the translation of the L11 operon by binding to its mRNA. The protein is Large ribosomal subunit protein uL1 of Phytoplasma australiense.